The following is a 312-amino-acid chain: HPr kinase/phosphorylase (312 aa).

Catalysis depends on residues His139 and Lys160. An ATP-binding site is contributed by 154 to 161 (GSSGVGKS). Ser161 lines the Mg(2+) pocket. The active-site Proton acceptor; for phosphorylation activity. Proton donor; for dephosphorylation activity is Asp178. Residues 202–211 (LEIRGLGIIN) are important for the catalytic mechanism of both phosphorylation and dephosphorylation. Glu203 is a binding site for Mg(2+). The active site involves Arg244. The interval 265-270 (PVRPGR) is important for the catalytic mechanism of dephosphorylation.

This sequence belongs to the HPrK/P family. As to quaternary structure, homohexamer. Requires Mg(2+) as cofactor.

The enzyme catalyses [HPr protein]-L-serine + ATP = [HPr protein]-O-phospho-L-serine + ADP + H(+). It catalyses the reaction [HPr protein]-O-phospho-L-serine + phosphate + H(+) = [HPr protein]-L-serine + diphosphate. In terms of biological role, catalyzes the ATP- as well as the pyrophosphate-dependent phosphorylation of a specific serine residue in HPr, a phosphocarrier protein of the phosphoenolpyruvate-dependent sugar phosphotransferase system (PTS). HprK/P also catalyzes the pyrophosphate-producing, inorganic phosphate-dependent dephosphorylation (phosphorolysis) of seryl-phosphorylated HPr (P-Ser-HPr). The two antagonistic activities of HprK/P are regulated by several intracellular metabolites, which change their concentration in response to the absence or presence of rapidly metabolisable carbon sources (glucose, fructose, etc.) in the growth medium. Therefore, by controlling the phosphorylation state of HPr, HPrK/P is a sensor enzyme that plays a major role in the regulation of carbon metabolism and sugar transport: it mediates carbon catabolite repression (CCR), and regulates PTS-catalyzed carbohydrate uptake and inducer exclusion. The polypeptide is HPr kinase/phosphorylase (Listeria innocua serovar 6a (strain ATCC BAA-680 / CLIP 11262)).